Consider the following 323-residue polypeptide: Aquaporin NIP3-1 (323 aa).

The residue at position 1 (M1) is an N-acetylmethionine. The next 2 helical transmembrane spans lie at 45 to 65 (LIGEFVGTFTMIFAGCSAIVV) and 73 to 93 (VTLPGIALVWGLVVTVMIYSI). The short motif at 102–104 (NPA) is the NPA 1 element. 3 helical membrane passes run 122–142 (GYIAAQLLGSTLAAAVLRLVF), 167–187 (TSFVMEFIATFNLMFVISAVA), and 196–216 (FAGIAIGATIVLDILFSGPIS). The short motif at 221 to 223 (NPA) is the NPA 2 element. A helical membrane pass occupies residues 239-259 (WLYIVSPVIGALSGAWTYGLL).

Belongs to the MIP/aquaporin (TC 1.A.8) family. NIP (TC 1.A.8.12) subfamily.

It localises to the membrane. Aquaporins facilitate the transport of water and small neutral solutes across cell membranes. The sequence is that of Aquaporin NIP3-1 (NIP3-1) from Arabidopsis thaliana (Mouse-ear cress).